Reading from the N-terminus, the 570-residue chain is A-type ATP synthase subunit A (570 aa).

Residue 223–230 (GPFGSGKT) coordinates ATP.

This sequence belongs to the ATPase alpha/beta chains family. Has multiple subunits with at least A(3), B(3), C, D, E, F, H, I and proteolipid K(x).

Its subcellular location is the cell membrane. The catalysed reaction is ATP + H2O + 4 H(+)(in) = ADP + phosphate + 5 H(+)(out). Its function is as follows. Component of the A-type ATP synthase that produces ATP from ADP in the presence of a proton gradient across the membrane. The A chain is the catalytic subunit. The sequence is that of A-type ATP synthase subunit A from Nanoarchaeum equitans (strain Kin4-M).